The primary structure comprises 333 residues: Phosphoribosylformylglycinamidine cyclo-ligase (333 aa).

The protein belongs to the AIR synthase family.

It is found in the cytoplasm. The catalysed reaction is 2-formamido-N(1)-(5-O-phospho-beta-D-ribosyl)acetamidine + ATP = 5-amino-1-(5-phospho-beta-D-ribosyl)imidazole + ADP + phosphate + H(+). It participates in purine metabolism; IMP biosynthesis via de novo pathway; 5-amino-1-(5-phospho-D-ribosyl)imidazole from N(2)-formyl-N(1)-(5-phospho-D-ribosyl)glycinamide: step 2/2. The polypeptide is Phosphoribosylformylglycinamidine cyclo-ligase (Methanococcoides burtonii (strain DSM 6242 / NBRC 107633 / OCM 468 / ACE-M)).